Here is a 171-residue protein sequence, read N- to C-terminus: 3-hydroxydecanoyl-[acyl-carrier-protein] dehydratase (171 aa).

H70 is an active-site residue.

This sequence belongs to the thioester dehydratase family. FabA subfamily. In terms of assembly, homodimer.

The protein resides in the cytoplasm. The enzyme catalyses a (3R)-hydroxyacyl-[ACP] = a (2E)-enoyl-[ACP] + H2O. It catalyses the reaction (3R)-hydroxydecanoyl-[ACP] = (2E)-decenoyl-[ACP] + H2O. The catalysed reaction is (2E)-decenoyl-[ACP] = (3Z)-decenoyl-[ACP]. The protein operates within lipid metabolism; fatty acid biosynthesis. In terms of biological role, necessary for the introduction of cis unsaturation into fatty acids. Catalyzes the dehydration of (3R)-3-hydroxydecanoyl-ACP to E-(2)-decenoyl-ACP and then its isomerization to Z-(3)-decenoyl-ACP. Can catalyze the dehydratase reaction for beta-hydroxyacyl-ACPs with saturated chain lengths up to 16:0, being most active on intermediate chain length. This Shewanella pealeana (strain ATCC 700345 / ANG-SQ1) protein is 3-hydroxydecanoyl-[acyl-carrier-protein] dehydratase.